A 600-amino-acid chain; its full sequence is Long-chain-fatty-acid--CoA ligase FadD15 (600 aa).

The protein belongs to the ATP-dependent AMP-binding enzyme family.

It catalyses the reaction a long-chain fatty acid + ATP + CoA = a long-chain fatty acyl-CoA + AMP + diphosphate. The enzyme catalyses dodecanoate + ATP + CoA = dodecanoyl-CoA + AMP + diphosphate. It carries out the reaction hexadecanoate + ATP + CoA = hexadecanoyl-CoA + AMP + diphosphate. It functions in the pathway lipid metabolism; fatty acid biosynthesis. Its function is as follows. Catalyzes the activation of long-chain fatty acids as acyl-coenzyme A (acyl-CoA), which are then transferred to the multifunctional polyketide synthase (PKS) type III for further chain extension. In Mycobacterium tuberculosis (strain ATCC 25618 / H37Rv), this protein is Long-chain-fatty-acid--CoA ligase FadD15 (fadD15).